A 616-amino-acid chain; its full sequence is Dihydroxy-acid dehydratase (616 aa).

Residue aspartate 81 coordinates Mg(2+). Cysteine 122 serves as a coordination point for [2Fe-2S] cluster. Positions 123 and 124 each coordinate Mg(2+). At lysine 124 the chain carries N6-carboxylysine. Cysteine 197 serves as a coordination point for [2Fe-2S] cluster. Residue glutamate 493 coordinates Mg(2+). Catalysis depends on serine 519, which acts as the Proton acceptor.

The protein belongs to the IlvD/Edd family. As to quaternary structure, homodimer. [2Fe-2S] cluster serves as cofactor. It depends on Mg(2+) as a cofactor.

It carries out the reaction (2R)-2,3-dihydroxy-3-methylbutanoate = 3-methyl-2-oxobutanoate + H2O. It catalyses the reaction (2R,3R)-2,3-dihydroxy-3-methylpentanoate = (S)-3-methyl-2-oxopentanoate + H2O. Its pathway is amino-acid biosynthesis; L-isoleucine biosynthesis; L-isoleucine from 2-oxobutanoate: step 3/4. The protein operates within amino-acid biosynthesis; L-valine biosynthesis; L-valine from pyruvate: step 3/4. Its function is as follows. Functions in the biosynthesis of branched-chain amino acids. Catalyzes the dehydration of (2R,3R)-2,3-dihydroxy-3-methylpentanoate (2,3-dihydroxy-3-methylvalerate) into 2-oxo-3-methylpentanoate (2-oxo-3-methylvalerate) and of (2R)-2,3-dihydroxy-3-methylbutanoate (2,3-dihydroxyisovalerate) into 2-oxo-3-methylbutanoate (2-oxoisovalerate), the penultimate precursor to L-isoleucine and L-valine, respectively. The polypeptide is Dihydroxy-acid dehydratase (Corynebacterium kroppenstedtii (strain DSM 44385 / JCM 11950 / CIP 105744 / CCUG 35717)).